Consider the following 85-residue polypeptide: MGNLISTFLSSSKGNSTAQITDCSIWCPRPGQHISIRTFRELNRAPMSNPTSRKTGTVSNGDCSRLTEEVLEADSRHQTTQLPRH.

Residue Gly2 is the site of N-myristoyl glycine; by host attachment. The tract at residues 44-63 is disordered; it reads RAPMSNPTSRKTGTVSNGDC. Positions 46–62 are enriched in polar residues; sequence PMSNPTSRKTGTVSNGD.

This sequence belongs to the geminiviridae protein AC4/C4 family.

It is found in the host cell membrane. Pathogenicity determinant. May act as a suppressor of RNA-mediated gene silencing, also known as post-transcriptional gene silencing (PTGS), a mechanism of plant viral defense that limits the accumulation of viral RNAs. This chain is Protein AC4, found in Potato yellow mosaic virus (isolate Venezuela) (PYMV).